Consider the following 424-residue polypeptide: uncharacterized protein (424 aa).

This sequence belongs to the serpin family.

This is an uncharacterized protein from Methanosarcina acetivorans (strain ATCC 35395 / DSM 2834 / JCM 12185 / C2A).